We begin with the raw amino-acid sequence, 246 residues long: Deoxycytidylate 5-hydroxymethyltransferase (246 aa).

C148 is a catalytic residue.

Belongs to the thymidylate synthase family.

The enzyme catalyses dCMP + (6R)-5,10-methylene-5,6,7,8-tetrahydrofolate + H2O = 5-hydroxymethyl-dCMP + (6S)-5,6,7,8-tetrahydrofolate. This Enterobacteria phage T4 (Bacteriophage T4) protein is Deoxycytidylate 5-hydroxymethyltransferase (42).